The primary structure comprises 646 residues: Elongation factor 4 (646 aa).

Positions 42–227 (AQIRNFCIIA…EVVRRVPHPQ (186 aa)) constitute a tr-type G domain. GTP is bound by residues 54–59 (DHGKST) and 174–177 (NKID).

This sequence belongs to the TRAFAC class translation factor GTPase superfamily. Classic translation factor GTPase family. LepA subfamily.

It is found in the cell membrane. It carries out the reaction GTP + H2O = GDP + phosphate + H(+). Required for accurate and efficient protein synthesis under certain stress conditions. May act as a fidelity factor of the translation reaction, by catalyzing a one-codon backward translocation of tRNAs on improperly translocated ribosomes. Back-translocation proceeds from a post-translocation (POST) complex to a pre-translocation (PRE) complex, thus giving elongation factor G a second chance to translocate the tRNAs correctly. Binds to ribosomes in a GTP-dependent manner. This Mycobacterium leprae (strain Br4923) protein is Elongation factor 4.